A 239-amino-acid chain; its full sequence is Lysophospholipase-like protein 1 (239 aa).

N-acetylalanine is present on Ala-2. Active-site charge relay system residues include Ser-125, Asp-180, and His-212.

This sequence belongs to the AB hydrolase superfamily. AB hydrolase 2 family.

It localises to the cytoplasm. The protein localises to the cytosol. The enzyme catalyses S-hexadecanoyl-L-cysteinyl-[protein] + H2O = L-cysteinyl-[protein] + hexadecanoate + H(+). Its function is as follows. Palmitoyl thioesterase that catalyzes depalmitoylation of CGAS and KCNMA1. Acts as a regulator of innate immunity by mediating depalmitoylation of CGAS, thereby preventing CGAS homodimerization and cyclic GMP-AMP synthase activity. Does not exhibit phospholipase nor triacylglycerol lipase activity, able to hydrolyze only short chain substrates due to its shallow active site. The chain is Lysophospholipase-like protein 1 from Mus musculus (Mouse).